The primary structure comprises 261 residues: MSESIAVIREKLSLVTSEQDPFFQLCTQDERKGVQKLLQSTRKKWEKEAKLAAKLIEMKRYETDLFKQGFQYIAGVDEVGRGPLAGPVVAAAVILPADFSVVGINDSKQLNEAKRDILFDVIKEEAISIGIGIIDHDVIDQVNIYEATKIAMRTALEELNPAPDFVLIDAMPLKYSESELSLIKGDTKSISIAAASIIAKVTRDRMMQQYDELYPGYDFANNMGYGTKKHLNGLDTIGICPIHRLSFSPVKEAKLHFESLK.

One can recognise an RNase H type-2 domain in the interval 71–259 (QYIAGVDEVG…VKEAKLHFES (189 aa)). 3 residues coordinate a divalent metal cation: Asp77, Glu78, and Asp169.

This sequence belongs to the RNase HII family. Mn(2+) is required as a cofactor. Mg(2+) serves as cofactor.

The protein resides in the cytoplasm. It catalyses the reaction Endonucleolytic cleavage to 5'-phosphomonoester.. Its function is as follows. Endonuclease that specifically degrades the RNA of RNA-DNA hybrids. This is Ribonuclease HII from Listeria innocua serovar 6a (strain ATCC BAA-680 / CLIP 11262).